The chain runs to 640 residues: 1-deoxy-D-xylulose-5-phosphate synthase (640 aa).

Thiamine diphosphate-binding positions include His-79 and 120-122; that span reads AHS. A Mg(2+)-binding site is contributed by Asp-151. Residues 152–153, Asn-180, Tyr-289, and Glu-371 each bind thiamine diphosphate; that span reads GA. Asn-180 is a binding site for Mg(2+).

It belongs to the transketolase family. DXPS subfamily. In terms of assembly, homodimer. Mg(2+) serves as cofactor. Thiamine diphosphate is required as a cofactor.

It catalyses the reaction D-glyceraldehyde 3-phosphate + pyruvate + H(+) = 1-deoxy-D-xylulose 5-phosphate + CO2. The protein operates within metabolic intermediate biosynthesis; 1-deoxy-D-xylulose 5-phosphate biosynthesis; 1-deoxy-D-xylulose 5-phosphate from D-glyceraldehyde 3-phosphate and pyruvate: step 1/1. Catalyzes the acyloin condensation reaction between C atoms 2 and 3 of pyruvate and glyceraldehyde 3-phosphate to yield 1-deoxy-D-xylulose-5-phosphate (DXP). This is 1-deoxy-D-xylulose-5-phosphate synthase from Erythrobacter litoralis (strain HTCC2594).